Reading from the N-terminus, the 273-residue chain is Shikimate dehydrogenase (NADP(+)) (273 aa).

Residues 15 to 17 (SKS) and Thr-62 each bind shikimate. Lys-66 acts as the Proton acceptor in catalysis. Residue Glu-78 participates in NADP(+) binding. Residues Asn-87 and Asp-103 each contribute to the shikimate site. Residues 127-131 (GAGGA), 150-155 (NRTQEK), and Met-213 each bind NADP(+). Tyr-215 is a shikimate binding site. Gly-237 provides a ligand contact to NADP(+).

It belongs to the shikimate dehydrogenase family. In terms of assembly, homodimer.

It carries out the reaction shikimate + NADP(+) = 3-dehydroshikimate + NADPH + H(+). The protein operates within metabolic intermediate biosynthesis; chorismate biosynthesis; chorismate from D-erythrose 4-phosphate and phosphoenolpyruvate: step 4/7. Its function is as follows. Involved in the biosynthesis of the chorismate, which leads to the biosynthesis of aromatic amino acids. Catalyzes the reversible NADPH linked reduction of 3-dehydroshikimate (DHSA) to yield shikimate (SA). The sequence is that of Shikimate dehydrogenase (NADP(+)) from Shewanella woodyi (strain ATCC 51908 / MS32).